Reading from the N-terminus, the 246-residue chain is Ribonuclease PH (246 aa).

Phosphate is bound by residues R86 and G124 to R126.

Belongs to the RNase PH family. Homohexameric ring arranged as a trimer of dimers.

It catalyses the reaction tRNA(n+1) + phosphate = tRNA(n) + a ribonucleoside 5'-diphosphate. Phosphorolytic 3'-5' exoribonuclease that plays an important role in tRNA 3'-end maturation. Removes nucleotide residues following the 3'-CCA terminus of tRNAs; can also add nucleotides to the ends of RNA molecules by using nucleoside diphosphates as substrates, but this may not be physiologically important. Probably plays a role in initiation of 16S rRNA degradation (leading to ribosome degradation) during starvation. This Bacillus licheniformis (strain ATCC 14580 / DSM 13 / JCM 2505 / CCUG 7422 / NBRC 12200 / NCIMB 9375 / NCTC 10341 / NRRL NRS-1264 / Gibson 46) protein is Ribonuclease PH.